Consider the following 274-residue polypeptide: Nitrogenase iron protein (274 aa).

8–15 (GKGGIGKS) serves as a coordination point for ATP. Cysteine 94 provides a ligand contact to [4Fe-4S] cluster. Arginine 97 is subject to ADP-ribosylarginine; by dinitrogenase reductase ADP-ribosyltransferase. Residue cysteine 131 coordinates [4Fe-4S] cluster.

Belongs to the NifH/BchL/ChlL family. In terms of assembly, homodimer. Requires [4Fe-4S] cluster as cofactor. In terms of processing, the reversible ADP-ribosylation of Arg-97 inactivates the nitrogenase reductase and regulates nitrogenase activity.

The enzyme catalyses N2 + 8 reduced [2Fe-2S]-[ferredoxin] + 16 ATP + 16 H2O = H2 + 8 oxidized [2Fe-2S]-[ferredoxin] + 2 NH4(+) + 16 ADP + 16 phosphate + 6 H(+). The key enzymatic reactions in nitrogen fixation are catalyzed by the nitrogenase complex, which has 2 components: the iron protein and the molybdenum-iron protein. In Chlorobium phaeobacteroides (strain DSM 266 / SMG 266 / 2430), this protein is Nitrogenase iron protein.